A 119-amino-acid chain; its full sequence is Large ribosomal subunit protein uL22c (119 aa).

It belongs to the universal ribosomal protein uL22 family. As to quaternary structure, part of the 50S ribosomal subunit.

It localises to the plastid. Its subcellular location is the chloroplast. In terms of biological role, this protein binds specifically to 23S rRNA. The globular domain of the protein is located near the polypeptide exit tunnel on the outside of the subunit, while an extended beta-hairpin is found that lines the wall of the exit tunnel in the center of the 70S ribosome. The polypeptide is Large ribosomal subunit protein uL22c (rpl22) (Chaetosphaeridium globosum (Charophycean green alga)).